The primary structure comprises 201 residues: LexA repressor (201 aa).

A DNA-binding region (H-T-H motif) is located at residues 29 to 49 (VREICKAVGLSSTSSVHFHLK). Residues Ser125 and Lys162 each act as for autocatalytic cleavage activity in the active site.

It belongs to the peptidase S24 family. In terms of assembly, homodimer.

The enzyme catalyses Hydrolysis of Ala-|-Gly bond in repressor LexA.. Represses a number of genes involved in the response to DNA damage (SOS response), including recA and lexA. In the presence of single-stranded DNA, RecA interacts with LexA causing an autocatalytic cleavage which disrupts the DNA-binding part of LexA, leading to derepression of the SOS regulon and eventually DNA repair. This Clostridium botulinum (strain ATCC 19397 / Type A) protein is LexA repressor.